Reading from the N-terminus, the 87-residue chain is Putative defensin-like protein 231 (87 aa).

Residues 1 to 26 (MKFATCFLVSYVLVFLVLSVCKEVEA) form the signal peptide. 4 disulfide bridges follow: Cys30/Cys85, Cys40/Cys66, Cys48/Cys79, and Cys64/Cys81.

Belongs to the DEFL family.

The protein resides in the secreted. The polypeptide is Putative defensin-like protein 231 (SCRL25) (Arabidopsis thaliana (Mouse-ear cress)).